The sequence spans 298 residues: Tyrosine recombinase XerD (298 aa).

A Core-binding (CB) domain is found at 2-87 (KQELARIEQF…AVRRLFQYLY (86 aa)). The Tyr recombinase domain maps to 108–292 (RLPKDLSEAQ…ATERLRQLHQ (185 aa)). Active-site residues include Arg-148, Lys-172, His-244, Arg-247, and His-270. The O-(3'-phospho-DNA)-tyrosine intermediate role is filled by Tyr-279.

This sequence belongs to the 'phage' integrase family. XerD subfamily. Forms a cyclic heterotetrameric complex composed of two molecules of XerC and two molecules of XerD, in which XerC interacts with XerD via its C-terminal region, XerD interacts with XerC via its C-terminal region and so on.

The protein resides in the cytoplasm. With respect to regulation, ftsK may regulate the catalytic switch between XerC and XerD in the heterotetrameric complex during the two steps of the recombination process. Functionally, site-specific tyrosine recombinase, which acts by catalyzing the cutting and rejoining of the recombining DNA molecules. Binds cooperatively to specific DNA consensus sequences that are separated from XerC binding sites by a short central region, forming the heterotetrameric XerC-XerD complex that recombines DNA substrates. The complex is essential to convert dimers of the bacterial chromosome into monomers to permit their segregation at cell division. It also contributes to the segregational stability of plasmids. In the complex XerD specifically exchanges the bottom DNA strands. The protein is Tyrosine recombinase XerD of Shigella flexneri.